Here is a 291-residue protein sequence, read N- to C-terminus: MVREQYTTVTEGTHIERPENQHIYKIGIYGWRKRCLYLFVLLLLAILVVNLALTIWILKVMWFSPIGMGHLHVTADGLRLEGESEFLFPLYAKEIRSRVDSSLLLQSTQNVTVSARNSEGEVTGRVKVGAQMVEVQSQHFQINSEDGKPLFSAEEQDVVVGTGRLRVTGPEGALFEHSVETPLVRADPFQDLRLESPTRSLSMDAPRGVHVKANAGKLEALSQMDIILQSSEGVLVLDAETVGLTKLKQGTQGPAGSSNGFYEICACPDGKLYLSMAGEVTTCEEHSHVCL.

At 1 to 37 (MVREQYTTVTEGTHIERPENQHIYKIGIYGWRKRCLY) the chain is on the cytoplasmic side. Residues 38 to 58 (LFVLLLLAILVVNLALTIWIL) traverse the membrane as a helical; Signal-anchor for type II membrane protein segment. Over 59-291 (KVMWFSPIGM…TCEEHSHVCL (233 aa)) the chain is Extracellular. Asparagine 110 carries N-linked (GlcNAc...) asparagine glycosylation. Disulfide bonds link cysteine 265–cysteine 290 and cysteine 267–cysteine 283.

This sequence belongs to the sarcoglycan beta/delta/gamma/zeta family. In terms of assembly, interacts with the syntrophin SNTA1 and FLNC. Cross-link to form 2 major subcomplexes: one consisting of SGCB, SGCD and SGCG and the other consisting of SGCB and SGCD. The association between SGCB and SGCG is particularly strong while SGCA is loosely associated with the other sarcoglycans. As to expression, most strongly expressed in skeletal and heart muscle. Also detected in proliferating myoblasts.

Its subcellular location is the cell membrane. It localises to the sarcolemma. It is found in the cytoplasm. The protein resides in the cytoskeleton. In terms of biological role, component of the sarcoglycan complex, a subcomplex of the dystrophin-glycoprotein complex which forms a link between the F-actin cytoskeleton and the extracellular matrix. This is Gamma-sarcoglycan (Sgcg) from Mus musculus (Mouse).